The chain runs to 173 residues: Shikimate kinase (173 aa).

12-17 (GSGKTT) contacts ATP. Thr-16 is a Mg(2+) binding site. Substrate-binding residues include Asp-34, Arg-58, and Gly-80. Arg-118 is a binding site for ATP. Arg-136 is a binding site for substrate.

It belongs to the shikimate kinase family. In terms of assembly, monomer. Mg(2+) is required as a cofactor.

The protein localises to the cytoplasm. The catalysed reaction is shikimate + ATP = 3-phosphoshikimate + ADP + H(+). It participates in metabolic intermediate biosynthesis; chorismate biosynthesis; chorismate from D-erythrose 4-phosphate and phosphoenolpyruvate: step 5/7. Catalyzes the specific phosphorylation of the 3-hydroxyl group of shikimic acid using ATP as a cosubstrate. In Moorella thermoacetica (strain ATCC 39073 / JCM 9320), this protein is Shikimate kinase.